Here is a 451-residue protein sequence, read N- to C-terminus: FAD-dependent monooxygenase adrH (451 aa).

FAD-binding residues include glutamate 39, glycine 53, and arginine 112. The active site involves tyrosine 196. Positions 288 and 301 each coordinate FAD. Asparagine 385 carries N-linked (GlcNAc...) asparagine glycosylation. A helical membrane pass occupies residues 426-446 (TLLWVSSLALFLFFPWLGSYL).

The protein belongs to the paxM FAD-dependent monooxygenase family. The cofactor is FAD.

It localises to the membrane. The protein operates within secondary metabolite biosynthesis; terpenoid biosynthesis. Its function is as follows. FAD-dependent monooxygenase; part of the gene cluster that mediates the biosynthesis of andrastins, meroterpenoid compounds that exhibit inhibitory activity against ras farnesyltransferase, suggesting that they could be promising leads for antitumor agents. The first step of the pathway is the synthesis of 3,5-dimethylorsellinic acid (DMOA) by the polyketide synthase adrD via condensation of one acetyl-CoA starter unit with 3 malonyl-CoA units and 2 methylations. DMAO is then converted to farnesyl-DMAO by the prenyltransferase adrG. The methyltransferase adrK catalyzes the methylation of the carboxyl group of farnesyl-DMAO to farnesyl-DMAO methyl ester which is further converted to epoxyfarnesyl-DMAO methyl ester by the FAD-dependent monooxygenase adrH. The terpene cyclase adrI then catalyzes the carbon skeletal rearrangement to generate the andrastin E, the first compound in the pathway having the andrastin scaffold, with the tetracyclic ring system. The post-cyclization tailoring enzymes adrF, adrE, adrJ, and adrA, are involved in the conversion of andrastin E into andrastin A. The short chain dehydrogenase adrF is responsible for the oxidation of the C-3 a hydroxyl group of andrastin E to yield the corresponding ketone, andrastin D. The ketoreductase adrE stereoselectively reduces the carbonyl moiety to reverse the stereochemistry of the C-3 position to yield andrastin F. The acetyltransferase adrJ is the acetyltransferase that attaches the acetyl group to the C-3 hydroxyl group of andrastin F to yield andrastin C. Finally, the cytochrome P450 monooxygenase adrA catalyzes two sequential oxidation reactions of the C-23 methyl group, to generate the corresponding alcohol andrastin B, and aldehyde andrastin A. In Penicillium rubens (strain ATCC 28089 / DSM 1075 / NRRL 1951 / Wisconsin 54-1255) (Penicillium chrysogenum), this protein is FAD-dependent monooxygenase adrH.